We begin with the raw amino-acid sequence, 471 residues long: MKLPKTIGLVHFIGIGGIGMSGIAEVLHNLGHKVQGSDQADSANVQRLRDKGIEVFVGHRAENLGEAEVVVVSTAIKKSNPELIAAREKLLPVVRRAEMLAELMRFRNAIAIGGTHGKTTTTSLVATLLEAGGLDPTVINGGIINAYGTNARMGEGEWMVVEADESDGTFLKLPADVAVITNIDPEHLDHYGNFDAVRAAFRQFVENVPFYGFGVMCLDHPEVQSLVGRIEDRKIITYGENPQADVRFKNVRIDGTRSIFDVEIRRRRTGQVIELKGLVMPMPGRHNISNATAAIAVANRLGISSADIAKGLASFGGVKRRFTLTGEWNGVQIFDDYGHHPVEIKAVLRAARESCKGRVIAVHQPHRFSRLASLFEEFAACFNDADSIFLAPVYAAGEDPIEGIDSVSLVSRIKSGGHRDARFLTSAEFLPQMVAEVAKPGDFVVLLGAGSITSWAAALPKQLEGLSGKSV.

114–120 (GTHGKTT) provides a ligand contact to ATP.

It belongs to the MurCDEF family.

Its subcellular location is the cytoplasm. It carries out the reaction UDP-N-acetyl-alpha-D-muramate + L-alanine + ATP = UDP-N-acetyl-alpha-D-muramoyl-L-alanine + ADP + phosphate + H(+). Its pathway is cell wall biogenesis; peptidoglycan biosynthesis. Functionally, cell wall formation. The protein is UDP-N-acetylmuramate--L-alanine ligase of Rhizobium johnstonii (strain DSM 114642 / LMG 32736 / 3841) (Rhizobium leguminosarum bv. viciae).